The chain runs to 545 residues: CTP synthase (545 aa).

The segment at 1 to 266 (MKTKFIFITG…DQKIAIMLKL (266 aa)) is amidoligase domain. Ser-14 is a CTP binding site. Ser-14 contacts UTP. ATP contacts are provided by residues 15-20 (SLGKGL) and Asp-72. Mg(2+) contacts are provided by Asp-72 and Glu-140. Residues 147–149 (DIE), 187–192 (KTKPTQ), and Lys-223 contribute to the CTP site. UTP-binding positions include 187–192 (KTKPTQ) and Lys-223. The 255-residue stretch at 291 to 545 (TIGIVGKYVD…IKASCENKNK (255 aa)) folds into the Glutamine amidotransferase type-1 domain. Gly-353 provides a ligand contact to L-glutamine. The Nucleophile; for glutamine hydrolysis role is filled by Cys-380. L-glutamine contacts are provided by residues 381 to 384 (LGMQ), Glu-404, and Arg-472. Active-site residues include His-518 and Glu-520.

The protein belongs to the CTP synthase family. Homotetramer.

It carries out the reaction UTP + L-glutamine + ATP + H2O = CTP + L-glutamate + ADP + phosphate + 2 H(+). The catalysed reaction is L-glutamine + H2O = L-glutamate + NH4(+). The enzyme catalyses UTP + NH4(+) + ATP = CTP + ADP + phosphate + 2 H(+). The protein operates within pyrimidine metabolism; CTP biosynthesis via de novo pathway; CTP from UDP: step 2/2. Its activity is regulated as follows. Allosterically activated by GTP, when glutamine is the substrate; GTP has no effect on the reaction when ammonia is the substrate. The allosteric effector GTP functions by stabilizing the protein conformation that binds the tetrahedral intermediate(s) formed during glutamine hydrolysis. Inhibited by the product CTP, via allosteric rather than competitive inhibition. Functionally, catalyzes the ATP-dependent amination of UTP to CTP with either L-glutamine or ammonia as the source of nitrogen. Regulates intracellular CTP levels through interactions with the four ribonucleotide triphosphates. This Maridesulfovibrio salexigens (strain ATCC 14822 / DSM 2638 / NCIMB 8403 / VKM B-1763) (Desulfovibrio salexigens) protein is CTP synthase.